The chain runs to 160 residues: Cytochrome b6-f complex subunit 4 (160 aa).

3 consecutive transmembrane segments (helical) span residues 36–56 (LLYIFPVVIVGTIALCVGLAV), 95–115 (LLGIVAMASIPLGLMLVPFIE), and 131–151 (AVFLFGTAVTLWLGIGATLPI).

The protein belongs to the cytochrome b family. PetD subfamily. In terms of assembly, the 4 large subunits of the cytochrome b6-f complex are cytochrome b6, subunit IV (17 kDa polypeptide, PetD), cytochrome f and the Rieske protein, while the 4 small subunits are PetG, PetL, PetM and PetN. The complex functions as a dimer.

Its subcellular location is the cellular thylakoid membrane. Its function is as follows. Component of the cytochrome b6-f complex, which mediates electron transfer between photosystem II (PSII) and photosystem I (PSI), cyclic electron flow around PSI, and state transitions. This Trichodesmium erythraeum (strain IMS101) protein is Cytochrome b6-f complex subunit 4.